The primary structure comprises 68 residues: Putative protein YfaH (68 aa).

This is Putative protein YfaH (yfaH) from Escherichia coli (strain K12).